Here is a 654-residue protein sequence, read N- to C-terminus: Fructose-1,6-bisphosphatase class 3 (654 aa).

Belongs to the FBPase class 3 family. It depends on Mn(2+) as a cofactor.

It carries out the reaction beta-D-fructose 1,6-bisphosphate + H2O = beta-D-fructose 6-phosphate + phosphate. It participates in carbohydrate biosynthesis; gluconeogenesis. This is Fructose-1,6-bisphosphatase class 3 from Staphylococcus epidermidis (strain ATCC 35984 / DSM 28319 / BCRC 17069 / CCUG 31568 / BM 3577 / RP62A).